Here is a 206-residue protein sequence, read N- to C-terminus: Flavin reductase (NADPH) (206 aa).

NADP(+)-binding residues include Gly10, Thr12, Gly13, Asn14, Thr15, Arg35, Ser38, and Arg39. Phosphoserine is present on Ser42. Asp54, Val55, Leu75, Gly76, and Arg78 together coordinate NADP(+). Ser82 is subject to Phosphoserine. NADP(+) is bound by residues Met87, Cys109, His132, His153, and Ile154. The active-site S-nitroso-cysteine intermediate; for S-nitroso-CoA-dependent nitrosyltransferase activity is the Cys109. Residue Cys188 is the S-nitroso-cysteine intermediate; for S-nitroso-CoA-dependent nitrosyltransferase activity of the active site.

Monomer. In terms of tissue distribution, at least expressed in the liver and erythrocyte.

Its subcellular location is the cytoplasm. The catalysed reaction is reduced riboflavin + NADP(+) = riboflavin + NADPH + 2 H(+). It catalyses the reaction bilirubin IXbeta + NADP(+) = biliverdin IXbeta + NADPH + H(+). The enzyme catalyses FMNH2 + NAD(+) = FMN + NADH + 2 H(+). It carries out the reaction FMNH2 + NADP(+) = FMN + NADPH + 2 H(+). The catalysed reaction is S-nitroso-CoA + L-cysteinyl-[protein] = S-nitroso-L-cysteinyl-[protein] + CoA. It catalyses the reaction L-cysteinyl-[SCAN] + S-nitroso-CoA = S-nitroso-L-cysteinyl-[SCAN] + CoA. The enzyme catalyses S-nitroso-L-cysteinyl-[SCAN] + L-cysteinyl-[protein] = L-cysteinyl-[SCAN] + S-nitroso-L-cysteinyl-[protein]. Enzyme that can both act as a NAD(P)H-dependent reductase and a S-nitroso-CoA-dependent nitrosyltransferase. Promotes fetal heme degradation during development. Also expressed in adult tissues, where it acts as a regulator of hematopoiesis, intermediary metabolism (glutaminolysis, glycolysis, TCA cycle and pentose phosphate pathway) and insulin signaling. Has a broad specificity oxidoreductase activity by catalyzing the NAD(P)H-dependent reduction of a variety of flavins, such as riboflavin, FAD or FMN, biliverdins, methemoglobin and PQQ (pyrroloquinoline quinone). Contributes to fetal heme catabolism by catalyzing reduction of biliverdin IXbeta into bilirubin IXbeta in the liver. Biliverdin IXbeta, which constitutes the major heme catabolite in the fetus is not present in adult. Does not reduce bilirubin IXalpha. Can also reduce the complexed Fe(3+) iron to Fe(2+) in the presence of FMN and NADPH. Acts as a protein nitrosyltransferase by catalyzing nitrosylation of cysteine residues of target proteins, such as HMOX2, INSR and IRS1. S-nitroso-CoA-dependent nitrosyltransferase activity is mediated via a 'ping-pong' mechanism: BLVRB first associates with both S-nitroso-CoA and protein substrate, nitric oxide group is then transferred from S-nitroso-CoA to Cys-109 and Cys-188 residues of BLVRB and from S-nitroso-BLVRB to the protein substrate. Inhibits insulin signaling by mediating nitrosylation of INSR and IRS1, leading to their inhibition. The sequence is that of Flavin reductase (NADPH) (BLVRB) from Bos taurus (Bovine).